Reading from the N-terminus, the 622-residue chain is Probable ATP-dependent RNA helicase DDX41 (622 aa).

The segment covering 1–15 (MEESEPERKRARTDE) has biased composition (basic and acidic residues). Disordered regions lie at residues 1 to 39 (MEES…YVPL) and 52 to 84 (QRRR…PQSN). Ser4 is modified (phosphoserine). Lys9 is modified (N6-acetyllysine). A Glycyl lysine isopeptide (Lys-Gly) (interchain with G-Cter in ubiquitin) cross-link involves residue Lys9. 2 positions are modified to phosphoserine: Ser21 and Ser23. At Tyr33 the chain carries Phosphotyrosine. Lys115 is covalently cross-linked (Glycyl lysine isopeptide (Lys-Gly) (interchain with G-Cter in ubiquitin)). Positions 181 to 209 (KSFKEMKFPAAILRGLKKKGIHHPTPIQI) match the Q motif motif. The Helicase ATP-binding domain occupies 212 to 396 (IPTILSGRDM…KSALVKPVTI (185 aa)). Position 225–232 (225–232 (AFTGSGKT)) interacts with ATP. The short motif at 344–347 (DEAD) is the DEAD box element. In terms of domain architecture, Helicase C-terminal spans 407–567 (DVIQEVEYVK…KVPPVLQVLH (161 aa)). Tyr414 is modified (phosphotyrosine; by BTK). Residues Lys416 and Lys442 each participate in a glycyl lysine isopeptide (Lys-Gly) (interchain with G-Cter in SUMO2) cross-link. The segment at 580–597 (RGCAFCGGLGHRITDCPK) adopts a CCHC-type zinc-finger fold.

It belongs to the DEAD box helicase family. DDX41 subfamily. As to quaternary structure, identified in the spliceosome C complex. Interacts with ERCC6. Interacts with FAM50A. Interacts with STING1. Interacts with CGAS. Interacts with several spliceosomes components such as PRP19 or CDC5L. Post-translationally, acetylation at Lys-9 regulates the nuclear/cytoplasmic localization. In terms of processing, phosphorylated by BTK; phosphorylation induces binding to dsDNA and STING1. 'Lys-48'-linked ubiquitinated and degraded by TRIM21 leading to negative regulation of the innate immune response to intracellular dsDNA.

The protein resides in the nucleus. The protein localises to the cytoplasm. It carries out the reaction ATP + H2O = ADP + phosphate + H(+). Its function is as follows. Multifunctional protein that participates in many aspects of cellular RNA metabolism. Plays pivotal roles in innate immune sensing and hematopoietic homeostasis. Recognizes foreign or self-nucleic acids generated during microbial infection, thereby initiating anti-pathogen responses. Mechanistically, phosphorylation by BTK allows binding to dsDNA leading to interaction with STING1. Modulates the homeostasis of dsDNA through its ATP-dependent DNA-unwinding activity and ATP-independent strand-annealing activity. In turn, induces STING1-mediated type I interferon and cytokine responses to DNA and DNA viruses. Selectively modulates the transcription of certain immunity-associated genes by regulating their alternative splicing. Binds to RNA (R)-loops, structures consisting of DNA/RNA hybrids and a displaced strand of DNA that occur during transcription, and prevents their accumulation, thereby maintaining genome stability. Also participates in pre-mRNA splicing, translational regulation and snoRNA processing, which is essential for ribosome biogenesis. This is Probable ATP-dependent RNA helicase DDX41 (DDX41) from Homo sapiens (Human).